A 174-amino-acid polypeptide reads, in one-letter code: Probable NAD(P)H dehydrogenase subunit CRR3, chloroplastic (174 aa).

The transit peptide at 1 to 54 (MAVLSTIYSITRASTPTMASLTNDSPSPLPSSSPSKLPSPTSPSKKPLKLRQVS) directs the protein to the chloroplast. Positions 14–24 (STPTMASLTND) are enriched in polar residues. The interval 14 to 71 (STPTMASLTNDSPSPLPSSSPSKLPSPTSPSKKPLKLRQVSKQMGSQNQQRRGNKPSI) is disordered. Low complexity predominate over residues 30 to 45 (PSSSPSKLPSPTSPSK). Residues 53–64 (VSKQMGSQNQQR) show a composition bias toward polar residues. The helical transmembrane segment at 140–160 (FTIQWILPIWIMSLLVACGVI) threads the bilayer.

It localises to the plastid. Its subcellular location is the chloroplast thylakoid membrane. Its function is as follows. Probable subunit of the chloroplast NAD(P)H dehydrogenase (NDH) complex of the photosynthetic electron transport chain. Required for both formation and activity of NDH. May function in assembly or stabilization of the NDH complex. This chain is Probable NAD(P)H dehydrogenase subunit CRR3, chloroplastic, found in Arabidopsis thaliana (Mouse-ear cress).